The following is a 163-amino-acid chain: Photosystem II extrinsic protein V (163 aa).

An N-terminal signal peptide occupies residues 1-26; the sequence is MFKKSYQFFALVLFSIFNVLVTSASA. Heme c contacts are provided by C63, C66, H67, and H118.

Belongs to the cytochrome c family. PsbV subfamily. As to quaternary structure, PSII is composed of 1 copy each of membrane proteins PsbA, PsbB, PsbC, PsbD, PsbE, PsbF, PsbH, PsbI, PsbJ, PsbK, PsbL, PsbM, PsbT, PsbY, PsbZ, Psb30/Ycf12, at least 3 peripheral proteins of the oxygen-evolving complex and a large number of cofactors. It forms dimeric complexes. Requires heme c as cofactor.

It localises to the plastid. Its subcellular location is the chloroplast thylakoid membrane. Functionally, one of the extrinsic, lumenal subunits of photosystem II (PSII). PSII is a light-driven water plastoquinone oxidoreductase, using light energy to abstract electrons from H(2)O, generating a proton gradient subsequently used for ATP formation. The extrinsic proteins stabilize the structure of photosystem II oxygen-evolving complex (OEC), the ion environment of oxygen evolution and protect the OEC against heat-induced inactivation. The chain is Photosystem II extrinsic protein V from Trieres chinensis (Marine centric diatom).